The chain runs to 420 residues: S-adenosylmethionine synthase (420 aa).

His-16 serves as a coordination point for ATP. Asp-18 contributes to the Mg(2+) binding site. Glu-44 contacts K(+). Residues Glu-57 and Gln-100 each contribute to the L-methionine site. Residues 100–110 form a flexible loop region; sequence QSPDIAQGVNT. ATP contacts are provided by residues 175 to 177, 251 to 252, Asp-260, 266 to 267, Ala-283, and Lys-287; these read DGK, KF, and RK. Position 260 (Asp-260) interacts with L-methionine. Lys-291 contacts L-methionine.

This sequence belongs to the AdoMet synthase family. In terms of assembly, homotetramer; dimer of dimers. Mg(2+) is required as a cofactor. The cofactor is K(+).

The protein localises to the cytoplasm. The catalysed reaction is L-methionine + ATP + H2O = S-adenosyl-L-methionine + phosphate + diphosphate. The protein operates within amino-acid biosynthesis; S-adenosyl-L-methionine biosynthesis; S-adenosyl-L-methionine from L-methionine: step 1/1. In terms of biological role, catalyzes the formation of S-adenosylmethionine (AdoMet) from methionine and ATP. The overall synthetic reaction is composed of two sequential steps, AdoMet formation and the subsequent tripolyphosphate hydrolysis which occurs prior to release of AdoMet from the enzyme. The sequence is that of S-adenosylmethionine synthase from Trichormus variabilis (strain ATCC 29413 / PCC 7937) (Anabaena variabilis).